The primary structure comprises 96 residues: Large ribosomal subunit protein uL23 (96 aa).

The protein belongs to the universal ribosomal protein uL23 family. In terms of assembly, part of the 50S ribosomal subunit. Contacts protein L29, and trigger factor when it is bound to the ribosome.

In terms of biological role, one of the early assembly proteins it binds 23S rRNA. One of the proteins that surrounds the polypeptide exit tunnel on the outside of the ribosome. Forms the main docking site for trigger factor binding to the ribosome. The protein is Large ribosomal subunit protein uL23 of Nitratidesulfovibrio vulgaris (strain ATCC 29579 / DSM 644 / CCUG 34227 / NCIMB 8303 / VKM B-1760 / Hildenborough) (Desulfovibrio vulgaris).